We begin with the raw amino-acid sequence, 382 residues long: Sphingosine 1-phosphate receptor 1 (382 aa).

At V2 the chain carries N-acetylvaline. The Extracellular segment spans residues V2 to K46. Residue K10 is modified to N6-acetyllysine. N-linked (GlcNAc...) asparagine glycosylation is present at N30. The chain crosses the membrane as a helical span at residues L47 to L68. The Cytoplasmic portion of the chain corresponds to T69–Y82. A helical membrane pass occupies residues F83 to L104. The Extracellular segment spans residues S105–Q116. A helical transmembrane segment spans residues W117–I138. Residue R120 to E121 coordinates sphing-4-enine 1-phosphate. Topologically, residues A139–S160 are cytoplasmic. The chain crosses the membrane as a helical span at residues F161 to W182. Topologically, residues N183 to P196 are extracellular. A disulfide bridge connects residues C184 and C191. A helical transmembrane segment spans residues L197–I224. At Y225–T257 the chain is on the cytoplasmic side. T236 carries the post-translational modification Phosphothreonine. The helical transmembrane segment at V258 to L278 threads the bilayer. Sphing-4-enine 1-phosphate is bound at residue F265 to W269. Over D279–I289 the chain is Extracellular. Residues C282 and C287 are joined by a disulfide bond. A helical membrane pass occupies residues L290–I310. The Cytoplasmic portion of the chain corresponds to Y311–S382. C328 carries the S-palmitoyl cysteine lipid modification. Residues M348–S382 are disordered. A phosphoserine mark is found at S351 and S353. The span at S351–G366 shows a compositional bias: basic and acidic residues. The span at T371–S382 shows a compositional bias: polar residues.

The protein belongs to the G-protein coupled receptor 1 family. Interacts with GNAI1 and GNAI3. Interacts with CD69; this interaction promotes S1PR1 degradation. Palmitoylated by ZDHHC5. Palmitoylation is required for targeting to plasma membrane, enabling G(i) coupling. As to expression, expressed in a wide variety of tissues with highest levels in brain, heart and spleen. Lower levels found in kidney, liver, lung, muscle, placenta, thymus, and uterus. Very low levels in intestine, stomach and testis. According to PubMed:9931453, expressed modestly in apparent endothelial cells surrounding some blood vessels (e.g. aortic trunk).

It localises to the cell membrane. The protein resides in the endosome. It is found in the membrane raft. G-protein coupled receptor for the bioactive lysosphingolipid sphingosine 1-phosphate (S1P) that seems to be coupled to the G(i) subclass of heteromeric G proteins. Signaling leads to the activation of RAC1, SRC, PTK2/FAK1 and MAP kinases. Plays an important role in cell migration, probably via its role in the reorganization of the actin cytoskeleton and the formation of lamellipodia in response to stimuli that increase the activity of the sphingosine kinase SPHK1. Required for normal chemotaxis toward sphingosine 1-phosphate. Required for normal embryonic heart development and normal cardiac morphogenesis. Plays an important role in the regulation of sprouting angiogenesis and vascular maturation. Inhibits sprouting angiogenesis to prevent excessive sprouting during blood vessel development. Required for normal egress of mature T-cells from the thymus into the blood stream and into peripheral lymphoid organs. Plays a role in the migration of osteoclast precursor cells, the regulation of bone mineralization and bone homeostasis. Plays a role in responses to oxidized 1-palmitoyl-2-arachidonoyl-sn-glycero-3-phosphocholine by pulmonary endothelial cells and in the protection against ventilator-induced lung injury. The protein is Sphingosine 1-phosphate receptor 1 of Mus musculus (Mouse).